The sequence spans 159 residues: Ribosomal RNA large subunit methyltransferase H (159 aa).

Residues Leu76, Gly108, and 127–132 (FGLLTL) each bind S-adenosyl-L-methionine.

This sequence belongs to the RNA methyltransferase RlmH family. In terms of assembly, homodimer.

It localises to the cytoplasm. The catalysed reaction is pseudouridine(1915) in 23S rRNA + S-adenosyl-L-methionine = N(3)-methylpseudouridine(1915) in 23S rRNA + S-adenosyl-L-homocysteine + H(+). In terms of biological role, specifically methylates the pseudouridine at position 1915 (m3Psi1915) in 23S rRNA. The chain is Ribosomal RNA large subunit methyltransferase H from Streptococcus pyogenes serotype M3 (strain SSI-1).